The primary structure comprises 131 residues: Small ribosomal subunit protein uS8c (131 aa).

This sequence belongs to the universal ribosomal protein uS8 family. As to quaternary structure, part of the 30S ribosomal subunit.

It is found in the plastid. Its subcellular location is the chloroplast. Its function is as follows. One of the primary rRNA binding proteins, it binds directly to 16S rRNA central domain where it helps coordinate assembly of the platform of the 30S subunit. The chain is Small ribosomal subunit protein uS8c (rps8) from Tupiella akineta (Green alga).